The primary structure comprises 99 residues: Small ribosomal subunit protein eS24 (99 aa).

Belongs to the eukaryotic ribosomal protein eS24 family.

This is Small ribosomal subunit protein eS24 from Pyrococcus horikoshii (strain ATCC 700860 / DSM 12428 / JCM 9974 / NBRC 100139 / OT-3).